The sequence spans 186 residues: Nucleoside diphosphate kinase 6 (186 aa).

The ATP site is built by lysine 19, phenylalanine 68, arginine 96, threonine 102, arginine 116, and asparagine 126. Histidine 129 functions as the Pros-phosphohistidine intermediate in the catalytic mechanism.

The protein belongs to the NDK family. Mg(2+) serves as cofactor. In terms of tissue distribution, expressed at a moderately low level in many tissues. Most abundant in kidney, prostate, ovary, intestine, and spleen.

The catalysed reaction is a 2'-deoxyribonucleoside 5'-diphosphate + ATP = a 2'-deoxyribonucleoside 5'-triphosphate + ADP. It catalyses the reaction a ribonucleoside 5'-diphosphate + ATP = a ribonucleoside 5'-triphosphate + ADP. In terms of biological role, major role in the synthesis of nucleoside triphosphates other than ATP. The ATP gamma phosphate is transferred to the NDP beta phosphate via a ping-pong mechanism, using a phosphorylated active-site intermediate. Inhibitor of p53-induced apoptosis. This chain is Nucleoside diphosphate kinase 6 (NME6), found in Homo sapiens (Human).